The chain runs to 468 residues: UDP-N-acetylmuramoylalanine--D-glutamate ligase (468 aa).

127-133 (GTNGKTT) provides a ligand contact to ATP.

It belongs to the MurCDEF family.

It localises to the cytoplasm. It carries out the reaction UDP-N-acetyl-alpha-D-muramoyl-L-alanine + D-glutamate + ATP = UDP-N-acetyl-alpha-D-muramoyl-L-alanyl-D-glutamate + ADP + phosphate + H(+). Its pathway is cell wall biogenesis; peptidoglycan biosynthesis. Its function is as follows. Cell wall formation. Catalyzes the addition of glutamate to the nucleotide precursor UDP-N-acetylmuramoyl-L-alanine (UMA). The sequence is that of UDP-N-acetylmuramoylalanine--D-glutamate ligase from Prochlorococcus marinus (strain MIT 9312).